We begin with the raw amino-acid sequence, 159 residues long: Protein UXT homolog (159 aa).

Belongs to the UXT family.

In Nematostella vectensis (Starlet sea anemone), this protein is Protein UXT homolog.